The chain runs to 178 residues: Large ribosomal subunit protein uL6 (178 aa).

It belongs to the universal ribosomal protein uL6 family. Part of the 50S ribosomal subunit.

Its function is as follows. This protein binds to the 23S rRNA, and is important in its secondary structure. It is located near the subunit interface in the base of the L7/L12 stalk, and near the tRNA binding site of the peptidyltransferase center. The protein is Large ribosomal subunit protein uL6 of Buchnera aphidicola subsp. Schizaphis graminum (strain Sg).